Consider the following 319-residue polypeptide: Acetyl-coenzyme A carboxylase carboxyl transferase subunit alpha (319 aa).

Residues 32 to 293 (NVETEVRALR…KAVLLNELDA (262 aa)) form the CoA carboxyltransferase C-terminal domain.

Belongs to the AccA family. Acetyl-CoA carboxylase is a heterohexamer composed of biotin carboxyl carrier protein (AccB), biotin carboxylase (AccC) and two subunits each of ACCase subunit alpha (AccA) and ACCase subunit beta (AccD).

The protein resides in the cytoplasm. The enzyme catalyses N(6)-carboxybiotinyl-L-lysyl-[protein] + acetyl-CoA = N(6)-biotinyl-L-lysyl-[protein] + malonyl-CoA. The protein operates within lipid metabolism; malonyl-CoA biosynthesis; malonyl-CoA from acetyl-CoA: step 1/1. Its function is as follows. Component of the acetyl coenzyme A carboxylase (ACC) complex. First, biotin carboxylase catalyzes the carboxylation of biotin on its carrier protein (BCCP) and then the CO(2) group is transferred by the carboxyltransferase to acetyl-CoA to form malonyl-CoA. The protein is Acetyl-coenzyme A carboxylase carboxyl transferase subunit alpha of Xanthomonas axonopodis pv. citri (strain 306).